The chain runs to 966 residues: Protein mes-1 (966 aa).

The first 19 residues, 1 to 19 (MKIHHFLTLLCTFLPLTTT), serve as a signal peptide directing secretion. Topologically, residues 20–470 (ALTNSTPLSL…QASDIPTSVE (451 aa)) are extracellular. Asn-62, Asn-126, Asn-183, Asn-214, Asn-251, and Asn-372 each carry an N-linked (GlcNAc...) asparagine glycan. A helical membrane pass occupies residues 471 to 491 (LMAVVLATSAIFALIALFLLY). Residues 492–966 (RKRKRDKKAR…FKSVNVAATV (475 aa)) lie on the Cytoplasmic side of the membrane. Residues 656–966 (HNFNERIEKQ…FKSVNVAATV (311 aa)) form the Protein kinase domain. ATP-binding positions include 662–670 (IEKQAYWLM) and Lys-685.

This sequence belongs to the protein kinase superfamily.

It is found in the cell membrane. Functionally, during early embryogenesis, controls asymmetric cell division and the asymmetric localization of P granules of germline precursor P2 and its descendant P3. Probably upstream of tyrosine kinase src-1, plays a role in endoderm development by controlling spindle orientation during EMS blastomere cell division. Controls EMS spindle orientation probably by promoting lin-5 and gpr-1/2 enrichment at, and let-99 exclusion from the junction between P2 and EMS cells. The polypeptide is Protein mes-1 (Caenorhabditis elegans).